Reading from the N-terminus, the 423-residue chain is Gamma-glutamyl phosphate reductase (423 aa).

Belongs to the gamma-glutamyl phosphate reductase family.

The protein localises to the cytoplasm. The catalysed reaction is L-glutamate 5-semialdehyde + phosphate + NADP(+) = L-glutamyl 5-phosphate + NADPH + H(+). It participates in amino-acid biosynthesis; L-proline biosynthesis; L-glutamate 5-semialdehyde from L-glutamate: step 2/2. Its function is as follows. Catalyzes the NADPH-dependent reduction of L-glutamate 5-phosphate into L-glutamate 5-semialdehyde and phosphate. The product spontaneously undergoes cyclization to form 1-pyrroline-5-carboxylate. This Brucella suis (strain ATCC 23445 / NCTC 10510) protein is Gamma-glutamyl phosphate reductase.